The sequence spans 467 residues: Dynactin subunit 4 (467 aa).

Alanine 2 is modified (N-acetylalanine). Residue lysine 222 forms a Glycyl lysine isopeptide (Lys-Gly) (interchain with G-Cter in SUMO2) linkage. Phosphothreonine is present on threonine 414.

It belongs to the dynactin subunit 4 family. As to quaternary structure, subunit of dynactin, a multiprotein complex part of a tripartite complex with dynein and a adapter, such as BICDL1, BICD2 or HOOK3. The dynactin complex is built around ACTR1A/ACTB filament and consists of an actin-related filament composed of a shoulder domain, a pointed end and a barbed end. Its length is defined by its flexible shoulder domain. The soulder is composed of 2 DCTN1 subunits, 4 DCTN2 and 2 DCTN3. The 4 DCNT2 (via N-terminus) bind the ACTR1A filament and act as molecular rulers to determine the length. The pointed end is important for binding dynein-dynactin cargo adapters. Consists of 4 subunits: ACTR10, DCNT4, DCTN5 and DCTN6. The barbed end is composed of a CAPZA1:CAPZB heterodimers, which binds ACTR1A/ACTB filament and dynactin and stabilizes dynactin. Interacts with ATP7B, but not ATP7A, in a copper-dependent manner. Interacts with ANK2; this interaction is required for localization at costameres. Interacts with N4BP2L1.

It localises to the cytoplasm. The protein resides in the cytoskeleton. It is found in the microtubule organizing center. Its subcellular location is the centrosome. The protein localises to the stress fiber. It localises to the cell cortex. The protein resides in the myofibril. It is found in the sarcomere. Functionally, part of the dynactin complex that activates the molecular motor dynein for ultra-processive transport along microtubules. Together with dynein is involved in spindle assembly and cytokinesis. This chain is Dynactin subunit 4 (DCTN4), found in Sus scrofa (Pig).